Consider the following 344-residue polypeptide: Centromere protein L (344 aa).

The disordered stretch occupies residues 1–32 (MAGGRPAGSAIEMEGAMRTLPSSGRPSGTGWQ). Polar residues predominate over residues 20-32 (LPSSGRPSGTGWQ).

It belongs to the CENP-L/IML3 family. As to quaternary structure, component of the CENPA-HI complex, at least composed of CENPH, CENPI, CENPK, CENPL, CENPM, CENPO and CENPP.

Its subcellular location is the nucleus. It is found in the chromosome. It localises to the centromere. Functionally, component of the CENPA-HI complex, a centromeric complex involved in assembly of kinetochore proteins, mitotic progression and chromosome segregation. This Gallus gallus (Chicken) protein is Centromere protein L (CENPL).